A 376-amino-acid chain; its full sequence is Queuine tRNA-ribosyltransferase (376 aa).

The active-site Proton acceptor is the Asp90. Substrate contacts are provided by residues 90–94 (DSGGF), Asp144, Gln193, and Gly220. The segment at 251 to 257 (GVGTPED) is RNA binding. Asp270 functions as the Nucleophile in the catalytic mechanism. An RNA binding; important for wobble base 34 recognition region spans residues 275–279 (TRNAR). Residues Cys308, Cys310, Cys313, and His339 each contribute to the Zn(2+) site.

This sequence belongs to the queuine tRNA-ribosyltransferase family. In terms of assembly, homodimer. Within each dimer, one monomer is responsible for RNA recognition and catalysis, while the other monomer binds to the replacement base PreQ1. The cofactor is Zn(2+).

It carries out the reaction 7-aminomethyl-7-carbaguanine + guanosine(34) in tRNA = 7-aminomethyl-7-carbaguanosine(34) in tRNA + guanine. It participates in tRNA modification; tRNA-queuosine biosynthesis. Catalyzes the base-exchange of a guanine (G) residue with the queuine precursor 7-aminomethyl-7-deazaguanine (PreQ1) at position 34 (anticodon wobble position) in tRNAs with GU(N) anticodons (tRNA-Asp, -Asn, -His and -Tyr). Catalysis occurs through a double-displacement mechanism. The nucleophile active site attacks the C1' of nucleotide 34 to detach the guanine base from the RNA, forming a covalent enzyme-RNA intermediate. The proton acceptor active site deprotonates the incoming PreQ1, allowing a nucleophilic attack on the C1' of the ribose to form the product. After dissociation, two additional enzymatic reactions on the tRNA convert PreQ1 to queuine (Q), resulting in the hypermodified nucleoside queuosine (7-(((4,5-cis-dihydroxy-2-cyclopenten-1-yl)amino)methyl)-7-deazaguanosine). This Cupriavidus pinatubonensis (strain JMP 134 / LMG 1197) (Cupriavidus necator (strain JMP 134)) protein is Queuine tRNA-ribosyltransferase.